The primary structure comprises 413 residues: BSD domain-containing protein 1-A (413 aa).

Residues 146-198 (WLAYWDPEQRKAEISELLVTSPSIRALFTKMVPAAVSHSEFWQRYFYKVHQLE) enclose the BSD domain. 2 stretches are compositionally biased toward basic and acidic residues: residues 208 to 219 (KQRADQSVHSEE) and 255 to 271 (HVEDKSEKTAELNRDHT). Disordered regions lie at residues 208 to 228 (KQRADQSVHSEEPTWEEEEED) and 255 to 386 (HVED…EFDM). Low complexity predominate over residues 274–287 (TSPSESSESISPIT). Residues 297–322 (QTPSKEPSPGTLTVTKENTGAGTDET) show a composition bias toward polar residues. Residues 342-352 (QREDPPSDLRV) show a composition bias toward basic and acidic residues. A compositionally biased stretch (polar residues) spans 356–375 (NSDSGKSTPSNNGQKGSSTD). A compositionally biased stretch (acidic residues) spans 376-386 (ISEDWEKEFDM).

This chain is BSD domain-containing protein 1-A (bsdc1-a), found in Xenopus laevis (African clawed frog).